The chain runs to 239 residues: RNA-binding protein 38 (239 aa).

In terms of domain architecture, RRM spans 34-111; sequence TKIFVGGLPY…RKANVNLAYL (78 aa).

This sequence belongs to the RBM38 family.

The protein localises to the cytoplasm. It localises to the cytosol. Its subcellular location is the nucleus. RNA-binding protein that specifically bind the 3'-UTR of CDKN1A transcripts, leading to maintain the stability of CDKN1A transcripts, thereby acting as a mediator of the p53/TP53 family to regulate CDKN1A. CDKN1A is a cyclin-dependent kinase inhibitor transcriptionally regulated by the p53/TP53 family to induce cell cycle arrest. Isoform 1, but not isoform 2, has the ability to induce cell cycle arrest in G1 and maintain the stability of CDKN1A transcripts induced by p53/TP53. Also acts as a mRNA splicing factor. Specifically regulates the expression of FGFR2-IIIb, an epithelial cell-specific isoform of FGFR2. Plays a role in myogenic differentiation. Its function is as follows. (Microbial infection) Essential factor for the splicing of the pre-mRNAs of human parvovirus B19 (B19V) and for the expression of B19V 11-kDa protein, which enhances viral replication. The polypeptide is RNA-binding protein 38 (RBM38) (Homo sapiens (Human)).